The sequence spans 541 residues: 3-oxoacyl-[acyl-carrier-protein] synthase II, chloroplastic (541 aa).

The transit peptide at 1-103 (MVGASSSYAS…NRNQRRLNRA (103 aa)) directs the protein to the chloroplast. A Ketosynthase family 3 (KS3) domain is found at 129 to 539 (QRRVVVTGMG…GHNSSIIFAP (411 aa)). Catalysis depends on for beta-ketoacyl synthase activity residues cysteine 292, histidine 432, and histidine 468.

Belongs to the thiolase-like superfamily. Beta-ketoacyl-ACP synthases family. As to quaternary structure, homodimer. Mostly expressed in siliques, and, to a lower extent, in leaves, stems, flower buds, and flowers.

The protein localises to the plastid. It localises to the chloroplast stroma. The catalysed reaction is a fatty acyl-[ACP] + malonyl-[ACP] + H(+) = a 3-oxoacyl-[ACP] + holo-[ACP] + CO2. Functionally, essential protein that catalyzes the condensation reaction of fatty acid synthesis by the addition to an acyl acceptor of two carbons from malonyl-ACP. Specific for elongation from C-16 and C-16 to unsaturated C-18 fatty acids. Confers resistance to low temperatures by maintaining chloroplast membranes integrity. Involved in the regulation of fatty acids ratios during seed metabolism. Required for embryo development, especially at the transition from the globular to the heart stage. The sequence is that of 3-oxoacyl-[acyl-carrier-protein] synthase II, chloroplastic (KAS2) from Arabidopsis thaliana (Mouse-ear cress).